Reading from the N-terminus, the 424-residue chain is Nicotinate phosphoribosyltransferase (424 aa).

Phosphohistidine; by autocatalysis is present on His-242.

It belongs to the NAPRTase family. Post-translationally, transiently phosphorylated on a His residue during the reaction cycle. Phosphorylation strongly increases the affinity for substrates and increases the rate of nicotinate D-ribonucleotide production. Dephosphorylation regenerates the low-affinity form of the enzyme, leading to product release.

It catalyses the reaction nicotinate + 5-phospho-alpha-D-ribose 1-diphosphate + ATP + H2O = nicotinate beta-D-ribonucleotide + ADP + phosphate + diphosphate. The protein operates within cofactor biosynthesis; NAD(+) biosynthesis; nicotinate D-ribonucleotide from nicotinate: step 1/1. Its function is as follows. Catalyzes the synthesis of beta-nicotinate D-ribonucleotide from nicotinate and 5-phospho-D-ribose 1-phosphate at the expense of ATP. The protein is Nicotinate phosphoribosyltransferase of Bartonella bacilliformis (strain ATCC 35685 / KC583 / Herrer 020/F12,63).